A 1234-amino-acid polypeptide reads, in one-letter code: Protein Jumonji (1234 aa).

Positions 1 to 11 (MSKERPKRNII) are enriched in basic residues. Disordered regions lie at residues 1-22 (MSKERPKRNIIQKKYDDSDGIP), 68-150 (AKAL…LSKR), 169-339 (LPNS…VKYT), and 354-548 (RELV…GKSG). S78 bears the Phosphoserine mark. Over residues 86 to 98 (SQVSSTSNDVSSS) the composition is skewed to low complexity. The short motif at 104 to 110 (PSRKRPR) is the Nuclear localization signal element. Polar residues predominate over residues 117–129 (FAQSQPNSPSTTP). The sufficient for interaction with the PRC2 complex stretch occupies residues 141-170 (ATQISDLSKRKPKTEDFLTFLCLRGSPALP). Over residues 180 to 193 (QDEEDVEEEDDETE) the composition is skewed to acidic residues. The segment covering 197 to 210 (ATTNNASSSCQSTP) has biased composition (polar residues). The span at 211–221 (RKGKTHKHVHN) shows a compositional bias: basic residues. The span at 244 to 264 (KEATPGKEKHSEPRADSRREQ) shows a compositional bias: basic and acidic residues. Residues 265–285 (ASGAQPTAASAAASSAKGLAA) are compositionally biased toward low complexity. 2 stretches are compositionally biased toward polar residues: residues 304–322 (SKVNGVTRMSSLGAGTNSA) and 369–384 (SAVNHTISGKTESSNA). Position 378 is an N6-acetyllysine (K378). A compositionally biased stretch (basic and acidic residues) spans 418–440 (CTKEVGGRQLREGLRNSKRRLEE). S449 is subject to Phosphoserine. Composition is skewed to basic and acidic residues over residues 482–494 (VKKEVPERSLERN) and 529–544 (SSHKPHDPQGKPEKGS). The JmjN domain maps to 555–596 (IPVLRPSAKEFHDPLIYIESVRAQVEKYGMCRVIPPPDWRPE). The 93-residue stretch at 619 to 711 (WGPNVQRLAC…YLLSYDSLSP (93 aa)) folds into the ARID domain. Residues 872-876 (GSGFP) carry the GSGFP motif motif. The 165-residue stretch at 882–1046 (PFSRHGWNLT…MGFETAKEMK (165 aa)) folds into the JmjC domain. Positions 1206–1234 (ENCLNKPTPKRGPRKRATVDVPPSRLPSS) are disordered.

This sequence belongs to the JARID2 family. Associates with the PRC2 complex, which consists of the core components EED, EZH1 or EZH2, SUZ12, and RBBP4, and various combinations of accessory subunits including AEBP2, JARID2, PHF19, MTF2 and EPOP. Found in a monomeric PRC2.2 (class 2) complex consisting of at least SUZ12, RBBP4, AEBP2 and JARID2. Facilitates nucleosome binding of the PRC2 complex. Interacts with SUZ12 (via C2H2-type zinc finger domain); the interaction is direct; competes with EPOP for SUZ12 binding. Interacts with histone methyltransferases EHMT1/GLP1 and EHMT2/G9a. Interacts with GATA4 (via the N-terminal region). Interacts with NKX2-5 (via the C-terminal region). Interacts with RB1. Interacts with ZNF496. Interacts with ESRRB. Interacts with DDX18; this interaction inhibits the PRC2 complex. Widely expressed in embryos. In adults, expressed at high levels in heart, skeletal muscle, brain and thymus.

It is found in the nucleus. Regulator of histone methyltransferase complexes that plays an essential role in embryonic development, including heart and liver development, neural tube fusion process and hematopoiesis. Acts as an accessory subunit for the core PRC2 (Polycomb repressive complex 2) complex, which mediates histone H3K27 (H3K27me3) trimethylation on chromatin. Binds DNA and mediates the recruitment of the PRC2 complex to target genes in embryonic stem cells, thereby playing a key role in stem cell differentiation and normal embryonic development. In cardiac cells, it is required to repress expression of cyclin-D1 (CCND1) by activating methylation of 'Lys-9' of histone H3 (H3K9me) by the GLP1/EHMT1 and G9a/EHMT2 histone methyltransferases. Also acts as a transcriptional repressor of ANF via its interaction with GATA4 and NKX2-5. Participates in the negative regulation of cell proliferation signaling. Does not have histone demethylase activity. In Mus musculus (Mouse), this protein is Protein Jumonji (Jarid2).